The sequence spans 57 residues: uncharacterized protein (57 aa).

This is an uncharacterized protein from Dictyostelium discoideum (Social amoeba).